A 257-amino-acid chain; its full sequence is Taurine import ATP-binding protein TauB (257 aa).

An ABC transporter domain is found at 6-233 (LDKISIHYDG…RYAAGEPIRA (228 aa)). 38–45 (GRSGCGKT) is a binding site for ATP.

Belongs to the ABC transporter superfamily. Taurine importer (TC 3.A.1.17.1) family. The complex is composed of two ATP-binding proteins (TauB), two transmembrane proteins (TauC) and a solute-binding protein (TauA).

The protein localises to the cell inner membrane. It carries out the reaction taurine(out) + ATP + H2O = taurine(in) + ADP + phosphate + H(+). Part of the ABC transporter complex TauABC involved in taurine import. Responsible for energy coupling to the transport system. This chain is Taurine import ATP-binding protein TauB, found in Mesorhizobium japonicum (strain LMG 29417 / CECT 9101 / MAFF 303099) (Mesorhizobium loti (strain MAFF 303099)).